The sequence spans 258 residues: Phosphate import ATP-binding protein PstB (258 aa).

The ABC transporter domain maps to 13-253 (ITVENLNLWY…PREKSTEDYI (241 aa)). 45–52 (GPSGCGKS) lines the ATP pocket.

Belongs to the ABC transporter superfamily. Phosphate importer (TC 3.A.1.7) family. In terms of assembly, the complex is composed of two ATP-binding proteins (PstB), two transmembrane proteins (PstC and PstA) and a solute-binding protein (PstS).

Its subcellular location is the cell membrane. It catalyses the reaction phosphate(out) + ATP + H2O = ADP + 2 phosphate(in) + H(+). Functionally, part of the ABC transporter complex PstSACB involved in phosphate import. Responsible for energy coupling to the transport system. The sequence is that of Phosphate import ATP-binding protein PstB from Methanosarcina mazei (strain ATCC BAA-159 / DSM 3647 / Goe1 / Go1 / JCM 11833 / OCM 88) (Methanosarcina frisia).